Reading from the N-terminus, the 205-residue chain is Large ribosomal subunit protein uL4 (205 aa).

A disordered region spans residues 45-97 (RQGTSAVKNRSAVRGGGKKPWRQKGTGRARQGSIRAPQWRGGGTVFGPTPRSY). Residues 60-71 (GGKKPWRQKGTG) show a composition bias toward basic residues.

It belongs to the universal ribosomal protein uL4 family. In terms of assembly, part of the 50S ribosomal subunit.

Functionally, one of the primary rRNA binding proteins, this protein initially binds near the 5'-end of the 23S rRNA. It is important during the early stages of 50S assembly. It makes multiple contacts with different domains of the 23S rRNA in the assembled 50S subunit and ribosome. Forms part of the polypeptide exit tunnel. This is Large ribosomal subunit protein uL4 from Lactobacillus johnsonii (strain CNCM I-12250 / La1 / NCC 533).